We begin with the raw amino-acid sequence, 561 residues long: Acyl-CoA ligase frbB (561 aa).

Residues 213-221, 354-359, D437, R456, and K551 each bind ATP; these read TSGTSGAQK and PGWGLT. An SBD1 region spans residues 284–354; sequence DLKRVLGSIA…TLRPKWHLQP (71 aa). Residues 355–417 are SBD2; it reads GWGLTEGGGA…MKSPSVIAGY (63 aa).

This sequence belongs to the ATP-dependent AMP-binding enzyme family.

The protein operates within antifungal biosynthesis. Functionally, acyl-CoA ligase; part of the gene cluster that mediates the biosynthesis of the antifungal antibiotic FR901469, an inhibitor of beta-1,3-glucansynthase, exerting antifungal activity against the pathogenes Candida albicans and Aspergillus fumigatus. FR901469 is a cyclic depsipeptide containing 12 amino acid residues and a fatty acid chain. The NRPS frbI contains 12 modules responsible for the formation of the depsipeptide backbone which is denoted as Acyl-Thr-Ala-Tyr-Val-4OHPro-Thr-Thr-3OHPro-threo3OHGln-Gly-Thr-Orn-OH (C71H116N14O23). The PKS frbB is probably involved in the production of the hydrocarbon chain, and the acyl-CoA ligase frbC might be involved in the transport of the chain to the peptide ptoduct of frbI. Because FR901469 contains 3 hydroxylated amino acid residues, the 3 oxygenases frbA, frbH, and frbJ might be participating in amino acid hydroxylation. As no thioesterase domains were detected in frbI or frbB, the thioesterases frbD and frbE may instead release and cyclize the products of the NRPS and PKS, respectively. The sequence is that of Acyl-CoA ligase frbB from Dothideomycetidae sp. (strain 11243) (Fungal sp. (strain No.11243)).